Consider the following 449-residue polypeptide: Cryptochrome DASH (449 aa).

Residues 15 to 147 form the Photolyase/cryptochrome alpha/beta domain; sequence RLGLFVFRND…PFHETPNNTL (133 aa).

Belongs to the DNA photolyase class-1 family. FAD is required as a cofactor. It depends on (6R)-5,10-methylene-5,6,7,8-tetrahydrofolate as a cofactor.

May have a photoreceptor function. Binds DNA; probably functions as a transcriptional repressor. The chain is Cryptochrome DASH (cry) from Idiomarina loihiensis (strain ATCC BAA-735 / DSM 15497 / L2-TR).